The following is a 180-amino-acid chain: MDWPHNLLFLLTISIFLGLGQPRSPKSKRKGQGRPGPLAPGPHQVPLDLVSRMKPYARMEEYERNIEEMVAQLRNSSELAQRKCEVNLQLWMSNKRSLSPWGYSINHDPSRIPVDLPEARCLCLGCVNPFTMQEDRSMVSVPVFSQVPVRRRLCPPPPRTGPCRQRAVMETIAVGCTCIF.

Positions 1–20 (MDWPHNLLFLLTISIFLGLG) are cleaved as a signal peptide. A disordered region spans residues 22-44 (PRSPKSKRKGQGRPGPLAPGPHQ). N-linked (GlcNAc...) asparagine glycosylation occurs at Asn75. Intrachain disulfides connect Cys121-Cys176 and Cys126-Cys178.

Belongs to the IL-17 family. Expressed in adult pancreas, small intestine, stomach, spinal cord and testis. Less pronounced expression in prostate, colon mucosal lining, and ovary.

It is found in the secreted. Its function is as follows. Stimulates the release of tumor necrosis factor alpha and IL-1-beta from the monocytic cell line THP-1. The sequence is that of Interleukin-17B (IL17B) from Homo sapiens (Human).